The sequence spans 345 residues: Acyl-CoA--sterol O-acyltransferase 1 (345 aa).

Helical transmembrane passes span 1 to 21 (MASFIKAWGLVIISLCYTFFI), 32 to 52 (LILFFPVFLIFFIVPFLIYSL), 54 to 74 (LLGITAFFIAWLANFKLLLFA), 86 to 106 (PLSLPIFLAVSCLPIKIQLSP), 120 to 140 (GPLIYTIKAVFVVLIIKAYEY), 148 to 168 (VVLTLYAIHIYFALEIILAAT), 231 to 251 (ILAAFGTFVVSGIMHELIFFY), 258 to 278 (DWKMMWFFLINGFCTTVEIAI), and 291 to 311 (AISQVLTLTFVMVTALWLFLP).

It belongs to the wax synthase family.

The protein localises to the membrane. Its function is as follows. Involved in the esterification of cycloartenol. Not implicated in the formation of sterol esters in flowers or during seed maturation. Has a substrate preference toward saturated fatty acyl donors (16:0 &gt; 18:0 &gt; 16:1 &gt; 18:1). Does not require triacyglycerols (TAGs) as a fatty acyl donor, and is unable to acylate diacylglycerol to produce TAG. The chain is Acyl-CoA--sterol O-acyltransferase 1 (ASAT1) from Arabidopsis thaliana (Mouse-ear cress).